We begin with the raw amino-acid sequence, 58 residues long: Proteinase inhibitor PSKP-2 (58 aa).

Residues 1–58 (VIEPDCKKYEGKKCPPDIALVCGTNGREYYNECALCVFIRDSTLKADKAIKIKKWGKC) enclose the Kazal-like domain. Intrachain disulfides connect Cys-6-Cys-36, Cys-14-Cys-33, and Cys-22-Cys-58.

In terms of tissue distribution, skin.

Its subcellular location is the secreted. In terms of biological role, may have a role in mucosal defense against microbes by interacting directly with their membranes. This Phyllomedusa sauvagei (Sauvage's leaf frog) protein is Proteinase inhibitor PSKP-2.